Reading from the N-terminus, the 183-residue chain is Glutathione-regulated potassium-efflux system ancillary protein KefG (183 aa).

The protein belongs to the NAD(P)H dehydrogenase (quinone) family. KefG subfamily. In terms of assembly, interacts with KefB.

Its subcellular location is the cell inner membrane. The enzyme catalyses a quinone + NADH + H(+) = a quinol + NAD(+). It catalyses the reaction a quinone + NADPH + H(+) = a quinol + NADP(+). Functionally, regulatory subunit of a potassium efflux system that confers protection against electrophiles. Required for full activity of KefB. In Salmonella paratyphi C (strain RKS4594), this protein is Glutathione-regulated potassium-efflux system ancillary protein KefG.